Consider the following 1007-residue polypeptide: Integrator complex subunit 8 (1007 aa).

Positions 19 to 24 match the WFEF motif motif; that stretch reads WFEFLL. Polar residues predominate over residues 56–78; the sequence is TAQESVGTPGSDLQNLNQTPSNS. Residues 56–112 form a disordered region; that stretch reads TAQESVGTPGSDLQNLNQTPSNSGPIPGVVGGAPAPTTPTASGGVGMPHSPQRPAEK. A compositionally biased stretch (low complexity) spans 79-97; sequence GPIPGVVGGAPAPTTPTAS.

It belongs to the Integrator subunit 8 family. Belongs to the multiprotein complex Integrator, at least composed of IntS1, IntS2, IntS3, IntS4, omd/IntS5, IntS6, defl/IntS7, IntS8, IntS9, IntS10, IntS11, IntS12, asun/IntS13, IntS14 and IntS15. The core complex associates with protein phosphatase 2A subunits mts/PP2A and Pp2A-29B, to form the Integrator-PP2A (INTAC) complex.

It is found in the nucleus. The protein resides in the chromosome. Functionally, component of the integrator complex, a multiprotein complex that terminates RNA polymerase II (Pol II) transcription in the promoter-proximal region of genes. The integrator complex provides a quality checkpoint during transcription elongation by driving premature transcription termination of transcripts that are unfavorably configured for transcriptional elongation: the complex terminates transcription by (1) catalyzing dephosphorylation of the C-terminal domain (CTD) of Pol II subunit Polr2A/Rbp1 and Spt5, and (2) degrading the exiting nascent RNA transcript via endonuclease activity. The integrator complex is also involved in the 3'-end processing of the U7 snRNA, and also the spliceosomal snRNAs U1, U2, U4 and U5. Within the integrator complex, INTS8 is required for the recruitment of protein phosphatase 2A (PP2A) to transcription pause-release checkpoint. This is Integrator complex subunit 8 from Drosophila melanogaster (Fruit fly).